Here is a 1007-residue protein sequence, read N- to C-terminus: Zinc finger CCCH domain-containing protein 4 (1007 aa).

The Helicase ATP-binding domain occupies 28–192; the sequence is VEKVKGNRVT…FRDLGRGERV (165 aa). Residue 41–48 coordinates ATP; that stretch reads GDTGCGKS. The short motif at 139–142 is the DEAH box element; sequence DEIH. A Helicase C-terminal domain is found at 250-420; that stretch reads LIHRLLLHIH…EQVLMICCAE (171 aa). 2 C3H1-type zinc fingers span residues 723-750 and 751-778; these read ALENEMCVFFLNGSCNRGDTCHFSHSSR and APRPICKFFLTLQGCRNGNSCSFSHDSG.

This is Zinc finger CCCH domain-containing protein 4 from Oryza sativa subsp. japonica (Rice).